The chain runs to 614 residues: DNA double-strand break repair protein Mre11 (614 aa).

D12, H14, D53, and N88 together coordinate Mn(2+). H89 functions as the Proton donor in the catalytic mechanism. Mn(2+)-binding residues include H158, D189, and H191. Disordered regions lie at residues 393 to 434 (ASPI…SPDI) and 487 to 614 (ALKK…GDYL). Residues 411–425 (PVSSADSVSAVSPES) are compositionally biased toward low complexity. 3 stretches are compositionally biased toward basic and acidic residues: residues 487–502 (ALKK…REAP), 535–558 (VPEK…KETG), and 568–591 (GSEK…EKPV).

This sequence belongs to the MRE11/RAD32 family. In terms of assembly, homodimer. Forms a heterotetramer composed of two Mre11 subunits and two Rad50 subunits. Mn(2+) serves as cofactor.

With respect to regulation, nuclease activity is regulated by Rad50. Part of the Rad50/Mre11 complex, which is involved in the early steps of DNA double-strand break (DSB) repair. The complex may facilitate opening of the processed DNA ends to aid in the recruitment of HerA and NurA. Mre11 binds to DSB ends and has both double-stranded 3'-5' exonuclease activity and single-stranded endonuclease activity. The chain is DNA double-strand break repair protein Mre11 from Methanosarcina acetivorans (strain ATCC 35395 / DSM 2834 / JCM 12185 / C2A).